The primary structure comprises 86 residues: Insulin-related peptide 2 (86 aa).

An N-terminal signal peptide occupies residues 1–19 (MKFYIVFALILACAACVSS). A propeptide spanning residues 20 to 43 (QEGTNFYCGRQLSRTLALVCWGAE) is cleaved from the precursor. Position 63 is an arginine amide (Arg-63). A propeptide spanning residues 67–86 (GPVDECCLKPCSIEEMLTYC) is cleaved from the precursor.

The protein belongs to the insulin family. In terms of tissue distribution, DAGWWVPPQSARALGGGR-amide: Expressed in corpora cardiaca (CC), corpora allata (CA), antennal lobe (AL) and gnathal ganglion (GNG) (at protein level). Expression in CC and CA detected in most animals, in AL in some animals and in GNG in few animals (at protein level).

It is found in the secreted. This chain is Insulin-related peptide 2, found in Agrotis ipsilon (Black cutworm moth).